The chain runs to 331 residues: Adenosine deaminase (331 aa).

Residues histidine 12 and histidine 14 each coordinate Zn(2+). Residues histidine 14 and aspartate 16 each contribute to the substrate site. Zn(2+) is bound at residue histidine 197. The active-site Proton donor is glutamate 200. A Zn(2+)-binding site is contributed by aspartate 278.

It belongs to the metallo-dependent hydrolases superfamily. Adenosine and AMP deaminases family. Adenosine deaminase subfamily. Requires Zn(2+) as cofactor.

It catalyses the reaction adenosine + H2O + H(+) = inosine + NH4(+). It carries out the reaction 2'-deoxyadenosine + H2O + H(+) = 2'-deoxyinosine + NH4(+). In terms of biological role, catalyzes the hydrolytic deamination of adenosine and 2-deoxyadenosine. The chain is Adenosine deaminase from Shewanella pealeana (strain ATCC 700345 / ANG-SQ1).